Here is a 223-residue protein sequence, read N- to C-terminus: Acetate CoA-transferase subunit beta (223 aa).

Glu46 is an active-site residue.

It belongs to the 3-oxoacid CoA-transferase subunit B family. As to quaternary structure, heterotetramer composed of two alpha subunits (AtoD) and two beta subunits (AtoA).

It catalyses the reaction an acyl-CoA + acetate = a carboxylate + acetyl-CoA. The enzyme catalyses acetoacetate + acetyl-CoA = acetoacetyl-CoA + acetate. It functions in the pathway lipid metabolism; short-chain fatty acid metabolism. In terms of biological role, coenzyme A transferase which is involved in short-chain fatty acid degradation and catalyzes the activation of short-chain fatty acids to their respective CoA thiolesters. This chain is Acetate CoA-transferase subunit beta (atoA), found in Haemophilus influenzae (strain ATCC 51907 / DSM 11121 / KW20 / Rd).